Consider the following 193-residue polypeptide: PXMP2/4 family protein 2 (193 aa).

4 consecutive transmembrane segments (helical) span residues 56-78 (VATMSTVGIFYSGPMLHYWYRSL), 96-116 (IDQLLFAPVAIGGFMTVTNFI), 132-152 (LFYAVKINWLIWPAAQIINFS), and 160-180 (VLYSSIISIFWGMFLSHISFD).

The protein belongs to the peroxisomal membrane protein PXMP2/4 family.

It localises to the membrane. In Dictyostelium discoideum (Social amoeba), this protein is PXMP2/4 family protein 2.